The chain runs to 862 residues: Protein JOKA2 (862 aa).

The PB1 domain occupies 6–90; that stretch reads SIVIKVKYEE…NPLRISARLN (85 aa). Low complexity predominate over residues 92 to 106; the sequence is GERSGRASARSSGNS. Disordered stretches follow at residues 92 to 117, 194 to 234, and 295 to 345; these read GERSGRASARSSGNSTPLRSPRVQPP, KGNT…ASNE, and VRNS…DSSG. The segment covering 325–345 has biased composition (polar residues); it reads SASSSKVKQCNWDSPNADSSG. The segment at 442–492 adopts a ZZ-type; degenerate zinc-finger fold; the sequence is HKGVRCDGCGVHPITGPRFISKVKENYDLCSICFAEMGNDADYIRMDRPLT. Zn(2+) is bound by residues C447, C450, C471, and C474. Positions 811-860 constitute a UBA domain; that stretch reads SVDDLCGVAEWDPILEELKEMGFCDKEMNKKLLKKNNGSIKRVVMDLIAG. The ATG8 interacting motif (AIM) signature appears at 817 to 824; sequence GVAEWDPI.

As to quaternary structure, interacts (via C-terminal AIM motif) with ATG8CL.

It localises to the vacuole. Its subcellular location is the cytoplasmic vesicle. The protein resides in the autophagosome. Autophagic substrate that functions as a host autophagy cargo receptor. Requires ATG8 protein expression to be recognized as an autophagic substrate. Activates ATG8CL-mediated selective autophagy, and contributes to defense against the fungal pathogen Phytophtora infestans. The chain is Protein JOKA2 from Solanum tuberosum (Potato).